A 459-amino-acid chain; its full sequence is Transcription factor 7-like 2 (459 aa).

The segment covering 1–11 has biased composition (gly residues); that stretch reads MPQLNGGGGDD. The interval 1–53 is CTNNB1-binding; that stretch reads MPQLNGGGGDDLGANDELISFKDEGEQEEKNSENSSAERDLADVKSSLVNESE. The disordered stretch occupies residues 1–96; that stretch reads MPQLNGGGGD…AKRQDGGLFK (96 aa). Positions 19–43 are enriched in basic and acidic residues; that stretch reads ISFKDEGEQEEKNSENSSAERDLAD. Lysine 22 is covalently cross-linked (Glycyl lysine isopeptide (Lys-Gly) (interchain with G-Cter in SUMO2)). Residues 47–56 are compositionally biased toward polar residues; the sequence is SLVNESETNQ. Positions 63 to 91 are enriched in basic and acidic residues; sequence EAERRPPPRSESFRDKSRESLEEAAKRQD. Threonine 178 and threonine 189 each carry phosphothreonine; by NLK. A mediates interaction with MAD2L2 region spans residues 178 to 372; it reads TPLITYSNEH…RRWHALSREE (195 aa). Over residues 295–305 the composition is skewed to polar residues; sequence TVKQESSQSDV. Disordered stretches follow at residues 295-327 and 397-418; these read TVKQ…KPHI and RDNY…TNEH. Lysine 297 is covalently cross-linked (Glycyl lysine isopeptide (Lys-Gly) (interchain with G-Cter in SUMO)). Residues 312 to 323 are compositionally biased toward basic and acidic residues; that stretch reads KHQDSKKEEEKK. Residues 327 to 395 constitute a DNA-binding region (HMG box); the sequence is IKKPLNAFML…LHMQLYPGWS (69 aa). Residues 402–408 carry the Nuclear localization signal motif; the sequence is KKKKRKR.

Belongs to the TCF/LEF family. In terms of assembly, interacts with TGFB1I1. Interacts with SPIN1. Interacts with CTNNB1 (via the armadillo repeat); forms stable transcription complex. Interacts with EP300. Interacts with NLK. Interacts with CCDC85B (probably through the HMG box); prevents interaction with CTNNB1. Interacts with TNIK. Interacts with MAD2L2; prevents TCF7L2/TCF4 binding to promZIPK/DAPK3oters, negatively modulating its transcriptional activity. Interacts with ZIPK/DAPK3. Interacts with XIAP/BIRC4 and TLE3. Interacts with DDIT3/CHOP. The CTNNB1 and TCF7L2/TCF4 complex interacts with PML (isoform PML-4). Identified in a complex with CTNNB1 and FERMT2. Interacts with C11orf84/SPINDOC in a SPIN1-dependent manner. Interacts with DAZAP2; the interaction results in localization of DAZAP2 to the nucleus. In terms of processing, phosphorylated at Thr-178 and/or Thr-189 by NLK. Phosphorylation by NLK at these sites inhibits DNA-binding by TCF7L2/TCF4, thereby preventing transcriptional activation of target genes of the canonical Wnt/beta-catenin signaling pathway. Post-translationally, polysumoylated. Sumoylation is enhanced by PIAS family members and desumoylation is enhanced by SENP2. Sumoylation/desumoylation regulates TCF7L2/TCF4 transcription activity in the Wnt/beta-catenin signaling pathway without altering interaction with CTNNB1 nor binding to DNA. In terms of tissue distribution, detected in adult brain and liver, and at lower levels in intestine, with a clear increase from the distal colon to the duodenum. Detected at low levels in heart, lung, kidney, pituitary and testis.

The protein resides in the nucleus. It is found in the PML body. Functionally, participates in the Wnt signaling pathway and modulates MYC expression by binding to its promoter in a sequence-specific manner. Acts as a repressor in the absence of CTNNB1, and as activator in its presence. Activates transcription from promoters with several copies of the Tcf motif CCTTTGATC in the presence of CTNNB1. TLE1, TLE2, TLE3 and TLE4 repress transactivation mediated by TCF7L2/TCF4 and CTNNB1. Expression of dominant-negative mutants results in cell-cycle arrest in G1. Necessary for the maintenance of the epithelial stem-cell compartment of the small intestine. In Mus musculus (Mouse), this protein is Transcription factor 7-like 2 (Tcf7l2).